The chain runs to 847 residues: DNA mismatch repair protein MutS (847 aa).

603 to 610 contacts ATP; sequence GPNMSGKS.

It belongs to the DNA mismatch repair MutS family.

Its function is as follows. This protein is involved in the repair of mismatches in DNA. It is possible that it carries out the mismatch recognition step. This protein has a weak ATPase activity. This Streptococcus suis (strain 98HAH33) protein is DNA mismatch repair protein MutS.